Here is an 815-residue protein sequence, read N- to C-terminus: Protein SMAX1-LIKE 3 (815 aa).

Residues 8–171 (VEQALTADAA…TKVEQAVSLE (164 aa)) form the Clp R domain. Repeat stretches follow at residues 12–80 (LTAD…LNRL) and 99–171 (ISNA…VSLE). The interval 750-769 (SRACSPPSNQKSDGSDQPED) is disordered. Residues 778–782 (LDLNL) carry the EAR motif.

The protein belongs to the ClpA/ClpB family. In terms of assembly, interacts probably with TPL/TPR in an EAR-motif dependent manner. In terms of tissue distribution, expressed in roots and seedlings.

In terms of biological role, may function in a transcriptional corepressor complex. The sequence is that of Protein SMAX1-LIKE 3 from Arabidopsis thaliana (Mouse-ear cress).